Here is a 465-residue protein sequence, read N- to C-terminus: Cytochrome P450 85A1 (465 aa).

The helical transmembrane segment at 2–22 threads the bilayer; that stretch reads GAMMVMMGLLLIIVSLCSALL. Cys-415 is a binding site for heme.

It belongs to the cytochrome P450 family. The cofactor is heme. Mainly expressed in apical shoots, hypocotyls, siliques and roots. Also present in the female gametophyte.

It is found in the membrane. The catalysed reaction is 6-deoxoteasterone + reduced [NADPH--hemoprotein reductase] + O2 = 6alpha-hydroxyteasterone + oxidized [NADPH--hemoprotein reductase] + H2O + H(+). It carries out the reaction 6alpha-hydroxytyphasterol + reduced [NADPH--hemoprotein reductase] + O2 = teasterone + oxidized [NADPH--hemoprotein reductase] + 2 H2O + H(+). It catalyses the reaction 3-dehydro-6-deoxoteasterone + reduced [NADPH--hemoprotein reductase] + O2 = 3-dehydro-6alpha-hydroxyteasterone + oxidized [NADPH--hemoprotein reductase] + H2O + H(+). The enzyme catalyses 3-dehydro-6alpha-hydroxyteasterone + reduced [NADPH--hemoprotein reductase] + O2 = 3-dehydroteasterone + oxidized [NADPH--hemoprotein reductase] + 2 H2O + H(+). The catalysed reaction is 6-deoxotyphasterol + reduced [NADPH--hemoprotein reductase] + O2 = 6alpha-hydroxytyphasterol + oxidized [NADPH--hemoprotein reductase] + H2O + H(+). It carries out the reaction 6alpha-hydroxytyphasterol + reduced [NADPH--hemoprotein reductase] + O2 = typhasterol + oxidized [NADPH--hemoprotein reductase] + 2 H2O + H(+). It catalyses the reaction 6-deoxocastasterone + reduced [NADPH--hemoprotein reductase] + O2 = 6alpha-hydroxycastasterone + oxidized [NADPH--hemoprotein reductase] + H2O + H(+). The enzyme catalyses 6alpha-hydroxycastasterone + reduced [NADPH--hemoprotein reductase] + O2 = castasterone + oxidized [NADPH--hemoprotein reductase] + 2 H2O + H(+). The catalysed reaction is 6-deoxocastasterone + 2 reduced [NADPH--hemoprotein reductase] + 2 O2 = castasterone + 2 oxidized [NADPH--hemoprotein reductase] + 3 H2O + 2 H(+). It carries out the reaction 6-deoxoteasterone + 2 reduced [NADPH--hemoprotein reductase] + 2 O2 = teasterone + 2 oxidized [NADPH--hemoprotein reductase] + 3 H2O + 2 H(+). It catalyses the reaction 6-deoxotyphasterol + 2 reduced [NADPH--hemoprotein reductase] + 2 O2 = typhasterol + 2 oxidized [NADPH--hemoprotein reductase] + 3 H2O + 2 H(+). The enzyme catalyses 3-dehydro-6-deoxoteasterone + 2 reduced [NADPH--hemoprotein reductase] + 2 O2 = 3-dehydroteasterone + 2 oxidized [NADPH--hemoprotein reductase] + 3 H2O + 2 H(+). It participates in plant hormone biosynthesis; brassinosteroid biosynthesis. Catalyzes the C6-oxidation step in brassinosteroids biosynthesis. Converts 6-deoxocastasterone (6-deoxoCS) to castasterone (CS). May also convert 6-deoxoteasterone (6-deoxoTE) to teasterone (TE), 3-dehydro-6-deoxoteasterone (6-deoxo3DT, 6-deoxo-3-DHT) to 3-dehydroteasterone (3DT, 3-DHT), and 6-deoxotyphasterol (6-deoxoTY) to typhasterol (TY). Required for the initiation of female gametogenesis (megagametogenesis). The polypeptide is Cytochrome P450 85A1 (Arabidopsis thaliana (Mouse-ear cress)).